A 316-amino-acid chain; its full sequence is Arginase-1 (316 aa).

Residues 1–26 (MAKERHSVGVIGAPFSKGQPRRGVEE) are disordered. His101, Asp124, His126, and Asp128 together coordinate Mn(2+). Residues 126–130 (HADIN), 137–139 (CGN), and Asp183 each bind substrate. Mn(2+) contacts are provided by Asp232 and Asp234. Residue Thr246 coordinates substrate.

Belongs to the arginase family. In terms of assembly, homotrimer. The cofactor is Mn(2+). In terms of tissue distribution, strongest expression in liver.

The enzyme catalyses L-arginine + H2O = urea + L-ornithine. It participates in nitrogen metabolism; urea cycle; L-ornithine and urea from L-arginine: step 1/1. The sequence is that of Arginase-1 (arg1) from Xenopus laevis (African clawed frog).